Reading from the N-terminus, the 300-residue chain is Bis(5'-nucleosyl)-tetraphosphatase, symmetrical (300 aa).

Belongs to the Ap4A hydrolase family.

The enzyme catalyses P(1),P(4)-bis(5'-adenosyl) tetraphosphate + H2O = 2 ADP + 2 H(+). Functionally, hydrolyzes diadenosine 5',5'''-P1,P4-tetraphosphate to yield ADP. The protein is Bis(5'-nucleosyl)-tetraphosphatase, symmetrical of Pseudomonas syringae pv. tomato (strain ATCC BAA-871 / DC3000).